Consider the following 274-residue polypeptide: NADPH-dependent 7-cyano-7-deazaguanine reductase (274 aa).

Position 80–82 (80–82) interacts with substrate; that stretch reads VES. 82 to 83 provides a ligand contact to NADPH; it reads SK. Cys181 serves as the catalytic Thioimide intermediate. Residue Asp188 is the Proton donor of the active site. 220 to 221 contributes to the substrate binding site; that stretch reads HE. Position 249 to 250 (249 to 250) interacts with NADPH; it reads RG.

This sequence belongs to the GTP cyclohydrolase I family. QueF type 2 subfamily. As to quaternary structure, homodimer.

Its subcellular location is the cytoplasm. The enzyme catalyses 7-aminomethyl-7-carbaguanine + 2 NADP(+) = 7-cyano-7-deazaguanine + 2 NADPH + 3 H(+). Its pathway is tRNA modification; tRNA-queuosine biosynthesis. Its function is as follows. Catalyzes the NADPH-dependent reduction of 7-cyano-7-deazaguanine (preQ0) to 7-aminomethyl-7-deazaguanine (preQ1). This is NADPH-dependent 7-cyano-7-deazaguanine reductase from Paraburkholderia phytofirmans (strain DSM 17436 / LMG 22146 / PsJN) (Burkholderia phytofirmans).